Here is a 194-residue protein sequence, read N- to C-terminus: Adapter protein MecA 2 (194 aa).

This sequence belongs to the MecA family. Homodimer.

In terms of biological role, enables the recognition and targeting of unfolded and aggregated proteins to the ClpC protease or to other proteins involved in proteolysis. Also involved in Spx degradation by ClpC. Acts negatively in the development of competence by binding ComK and recruiting it to the ClpCP protease. When overexpressed, inhibits sporulation. This is Adapter protein MecA 2 (mecB) from Bacillus subtilis (strain 168).